The sequence spans 872 residues: Protein SEY1 (872 aa).

At 1 to 749 (MVANGHFAGV…KRSAIGGITQ (749 aa)) the chain is on the cytoplasmic side. The GB1/RHD3-type G domain maps to 49 to 294 (GFNYHLISVF…IEGGIFLPEY (246 aa)). 59-66 (GSQSTGKS) provides a ligand contact to GTP. Residues 482–504 (SNYQQELSLYQKDLENIGGQLRR) adopt a coiled-coil conformation. The segment at 676–704 (LDKWIGHTPSSATPADEEDLTPIGGVDED) is disordered. The span at 690-704 (ADEEDLTPIGGVDED) shows a compositional bias: acidic residues. Residues 750 to 770 (VPLYFYGLLLALGWNEIVAVL) traverse the membrane as a helical segment. The Lumenal portion of the chain corresponds to 771–773 (RNP). The helical transmembrane segment at 774–794 (AYFLLLFVCAVTAYVTYQLNL) threads the bilayer. Over 795–872 (WGPIIKMTEA…IDDADDDDDF (78 aa)) the chain is Cytoplasmic. The segment at 849 to 872 (NRKSAGGFQNNRSHIDDADDDDDF) is disordered.

Belongs to the TRAFAC class dynamin-like GTPase superfamily. GB1/RHD3 GTPase family. RHD3 subfamily.

Its subcellular location is the endoplasmic reticulum membrane. In terms of biological role, cooperates with the reticulon proteins and tubule-shaping DP1 family proteins to generate and maintain the structure of the tubular endoplasmic reticulum network. Has GTPase activity, which is required for its function in ER organization. This Paracoccidioides brasiliensis (strain Pb03) protein is Protein SEY1.